A 102-amino-acid polypeptide reads, in one-letter code: Large ribosomal subunit protein bL21 (102 aa).

This sequence belongs to the bacterial ribosomal protein bL21 family. As to quaternary structure, part of the 50S ribosomal subunit. Contacts protein L20.

This protein binds to 23S rRNA in the presence of protein L20. This Exiguobacterium sp. (strain ATCC BAA-1283 / AT1b) protein is Large ribosomal subunit protein bL21.